The chain runs to 339 residues: Protein FAM76B (339 aa).

Alanine 2 is subject to N-acetylalanine. Phosphoserine occurs at positions 22 and 148. Residues 144-243 (EQRKSLGSSH…INQSADSGGT (100 aa)) are disordered. The segment covering 148–160 (SLGSSHSNSSSSS) has biased composition (low complexity). Basic residues predominate over residues 167–189 (HHPKHHHHHHHHHHRHSSSHHKI). Serine 193 bears the Phosphoserine mark. At threonine 215 the chain carries Phosphothreonine. Residues 215–224 (TPKKKPKLES) are compositionally biased toward basic and acidic residues. The span at 228 to 243 (NGDSSSINQSADSGGT) shows a compositional bias: polar residues. Residues 248-328 (LISQLKEEVM…QVAALSKGKK (81 aa)) are a coiled coil.

This sequence belongs to the FAM76 family. Interacts with HNRNPA2B1 (via C-terminus); the interaction results in retention of HNRNPA2B1 in the nucleus and inhibition of the NF-kappa-B-mediated inflammatory pathway.

The protein localises to the nucleus speckle. Its function is as follows. Negatively regulates the NF-kappa-B-mediated inflammatory pathway by preventing the translocation of HNRNPA2B1 from the nucleus to the cytoplasm. Inhibits the PI3K/Akt/NF-kappa-B pathway-mediated polarization of M1 macrophages by binding to and stabilizing PIK3CD mRNA, resulting in increased levels of PIK3CD protein and increased levels of phosphorylated downstream target AKT which leads to decreased NF-kappa-B signaling. The protein is Protein FAM76B (FAM76B) of Homo sapiens (Human).